The sequence spans 276 residues: Rhamnulose-1-phosphate aldolase (276 aa).

The active site involves Glu117. 3 residues coordinate Zn(2+): His141, His143, and His212.

The protein belongs to the aldolase class II family. RhaD subfamily. As to quaternary structure, homotetramer. The cofactor is Zn(2+).

The protein resides in the cytoplasm. It carries out the reaction L-rhamnulose 1-phosphate = (S)-lactaldehyde + dihydroxyacetone phosphate. The protein operates within carbohydrate degradation; L-rhamnose degradation; glycerone phosphate from L-rhamnose: step 3/3. Its function is as follows. Catalyzes the reversible cleavage of L-rhamnulose-1-phosphate to dihydroxyacetone phosphate (DHAP) and L-lactaldehyde. This chain is Rhamnulose-1-phosphate aldolase, found in Enterobacter sp. (strain 638).